We begin with the raw amino-acid sequence, 460 residues long: A-type ATP synthase subunit B (460 aa).

Belongs to the ATPase alpha/beta chains family. Has multiple subunits with at least A(3), B(3), C, D, E, F, H, I and proteolipid K(x).

Its subcellular location is the cell membrane. In terms of biological role, component of the A-type ATP synthase that produces ATP from ADP in the presence of a proton gradient across the membrane. The B chain is a regulatory subunit. The chain is A-type ATP synthase subunit B from Methanosarcina barkeri.